An 85-amino-acid polypeptide reads, in one-letter code: Large ribosomal subunit protein bL27 (85 aa).

Positions methionine 1 to leucine 21 are disordered.

Belongs to the bacterial ribosomal protein bL27 family.

The sequence is that of Large ribosomal subunit protein bL27 from Porphyromonas gingivalis (strain ATCC 33277 / DSM 20709 / CIP 103683 / JCM 12257 / NCTC 11834 / 2561).